The following is an 801-amino-acid chain: U-box domain-containing protein 34 (801 aa).

Positions 205 to 309 are disordered; it reads RSPTLPDPRQ…PETSRKSKKV (105 aa). A compositionally biased stretch (polar residues) spans 236–254; that stretch reads LTCNKPKTPQSSKASSATT. Residues 289–309 show a composition bias toward basic and acidic residues; sequence VSEHRDSDRSPPETSRKSKKV. Positions 301 to 395 form a coiled coil; that stretch reads ETSRKSKKVE…ETAKALLARE (95 aa). Residues 442–705 enclose the Protein kinase domain; the sequence is FSPEKVIGEG…DLKSEVIPVL (264 aa). Residues 448–456 and lysine 469 contribute to the ATP site; that span reads IGEGGYGKV. Aspartate 564 serves as the catalytic Proton acceptor. Residues 724 to 797 form the U-box domain; the sequence is RAPSHYFCPI…RDWKSRVRFS (74 aa).

This sequence belongs to the protein kinase superfamily. Ser/Thr protein kinase family.

The enzyme catalyses L-seryl-[protein] + ATP = O-phospho-L-seryl-[protein] + ADP + H(+). It carries out the reaction L-threonyl-[protein] + ATP = O-phospho-L-threonyl-[protein] + ADP + H(+). The catalysed reaction is S-ubiquitinyl-[E2 ubiquitin-conjugating enzyme]-L-cysteine + [acceptor protein]-L-lysine = [E2 ubiquitin-conjugating enzyme]-L-cysteine + N(6)-ubiquitinyl-[acceptor protein]-L-lysine.. It functions in the pathway protein modification; protein ubiquitination. Functionally, functions as an E3 ubiquitin ligase. The chain is U-box domain-containing protein 34 (PUB34) from Arabidopsis thaliana (Mouse-ear cress).